The following is a 294-amino-acid chain: Urease accessory protein UreD 1 (294 aa).

The segment at 1–22 (MALSLDGLPEKPAPAEAPSPPV) is disordered. The segment covering 11–21 (KPAPAEAPSPP) has biased composition (pro residues).

This sequence belongs to the UreD family. In terms of assembly, ureD, UreF and UreG form a complex that acts as a GTP-hydrolysis-dependent molecular chaperone, activating the urease apoprotein by helping to assemble the nickel containing metallocenter of UreC. The UreE protein probably delivers the nickel.

It is found in the cytoplasm. Required for maturation of urease via the functional incorporation of the urease nickel metallocenter. This is Urease accessory protein UreD 1 from Methylorubrum extorquens (strain PA1) (Methylobacterium extorquens).